Reading from the N-terminus, the 165-residue chain is Ribosome maturation factor RimM (165 aa).

The 72-residue stretch at 92-163 (EARHYWADLE…RVVVDPPEGL (72 aa)) folds into the PRC barrel domain.

Belongs to the RimM family. Binds ribosomal protein uS19.

It localises to the cytoplasm. An accessory protein needed during the final step in the assembly of 30S ribosomal subunit, possibly for assembly of the head region. Essential for efficient processing of 16S rRNA. May be needed both before and after RbfA during the maturation of 16S rRNA. It has affinity for free ribosomal 30S subunits but not for 70S ribosomes. The chain is Ribosome maturation factor RimM from Anaeromyxobacter sp. (strain Fw109-5).